Reading from the N-terminus, the 235-residue chain is Myb family transcription factor PHL12 (235 aa).

Basic and acidic residues predominate over residues 1 to 12 (MMQSREEIRDDS). Residues 1 to 20 (MMQSREEIRDDSSSGLVLTT) are disordered. The HTH myb-type domain maps to 20–80 (TDPKPRLRWT…HLQKFRLGKQ (61 aa)). Residues 51 to 76 (PKTIMRVMGVKGLTLYHLKSHLQKFR) constitute a DNA-binding region (H-T-H motif). A coiled coil region spans residues 119 to 139 (RNMNEMQMEVQRRIEEEVVIE).

Belongs to the MYB-CC family. As to expression, expressed in phloem and/or cambium.

The protein localises to the nucleus. The protein is Myb family transcription factor PHL12 of Arabidopsis thaliana (Mouse-ear cress).